The primary structure comprises 348 residues: Large ribosomal subunit protein uL3m (348 aa).

The N-terminal 40 residues, 1 to 40 (MPGWRLLAQAGARVLGCGARGLGADPGLERRKNILFFVRN), are a transit peptide targeting the mitochondrion.

Belongs to the universal ribosomal protein uL3 family. Component of the mitochondrial ribosome large subunit (39S) which comprises a 16S rRNA and about 50 distinct proteins.

It localises to the mitochondrion. The chain is Large ribosomal subunit protein uL3m (Mrpl3) from Mus musculus (Mouse).